We begin with the raw amino-acid sequence, 365 residues long: tRNA-specific 2-thiouridylase MnmA (365 aa).

ATP-binding positions include 14–21 (AMSGGVDS) and Leu40. Catalysis depends on Cys108, which acts as the Nucleophile. Cys108 and Cys204 are oxidised to a cystine. Gly132 contributes to the ATP binding site. The interaction with tRNA stretch occupies residues 154–156 (KDQ). Cys204 functions as the Cysteine persulfide intermediate in the catalytic mechanism.

It belongs to the MnmA/TRMU family.

It localises to the cytoplasm. It catalyses the reaction S-sulfanyl-L-cysteinyl-[protein] + uridine(34) in tRNA + AH2 + ATP = 2-thiouridine(34) in tRNA + L-cysteinyl-[protein] + A + AMP + diphosphate + H(+). Catalyzes the 2-thiolation of uridine at the wobble position (U34) of tRNA, leading to the formation of s(2)U34. The protein is tRNA-specific 2-thiouridylase MnmA of Rickettsia rickettsii (strain Iowa).